The chain runs to 370 residues: 3-dehydroquinate synthase (370 aa).

Residues 108 to 112 (GVIGD), 132 to 133 (TT), Lys145, and Lys154 each bind NAD(+). 3 residues coordinate Zn(2+): Glu187, His249, and His267.

This sequence belongs to the sugar phosphate cyclases superfamily. Dehydroquinate synthase family. Co(2+) serves as cofactor. Requires Zn(2+) as cofactor. NAD(+) is required as a cofactor.

Its subcellular location is the cytoplasm. The enzyme catalyses 7-phospho-2-dehydro-3-deoxy-D-arabino-heptonate = 3-dehydroquinate + phosphate. It functions in the pathway metabolic intermediate biosynthesis; chorismate biosynthesis; chorismate from D-erythrose 4-phosphate and phosphoenolpyruvate: step 2/7. In terms of biological role, catalyzes the conversion of 3-deoxy-D-arabino-heptulosonate 7-phosphate (DAHP) to dehydroquinate (DHQ). The protein is 3-dehydroquinate synthase of Cereibacter sphaeroides (strain ATCC 17025 / ATH 2.4.3) (Rhodobacter sphaeroides).